Consider the following 747-residue polypeptide: MNVSKILVSPTVTTNVLRIFAPRLPQIGASLLVQKKWALRSKKFYRFYSEKNSGEMPPKKEADSSGKASNKSTISSIDNSQPPPPSNTNDKTKQANVAVSHAMLATREQEANKDLTSPDAQAAFYKLLLQSNYPQYVVSRFETPGIASSPECMELYMEALQRIGRHSEADAVRQNLLTASSAGAVNPSLASSSSNQSGYHGNFPSMYSPLYGSRKEPLHVVVSESTFTVVSRWVKWLLVFGILTYSFSEGFKYITENTTLLKSSEVADKSVDVAKTNVKFDDVCGCDEARAELEEIVDFLKDPTKYESLGGKLPKGVLLTGPPGTGKTLLARATAGEAGVDFFFMSGSEFDEVYVGVGAKRIRDLFAQARSRAPAIIFIDELDAIGGKRNPKDQAYAKQTLNQLLVELDGFSQTSGIIIIGATNFPEALDKALTRPGRFDKVVNVDLPDVRGRADILKHHMKKITLADNVDPTIIARGTPGLSGAELANLVNQAAVYACQKNAVSVDMSHFEWAKDKILMGAERKTMVLTDAARKATAFHEAGHAIMAKYTNGATPLYKATILPRGRALGITFQLPEMDKVDITKRECQARLDVCMGGKIAEELIYGKDNTTSGCGSDLQSATGTARAMVTQYGMSDDVGPVNLSENWESWSNKIRDIADNEVIELLKDSEERARRLLTKKNVELHRLAQGLIEYETLDAHEIEQVCKGEKLDKLKTSTNTVVEGPDSDERKDIGDDKPKIPTMLNA.

The segment covering Lys51–Ser64 has biased composition (basic and acidic residues). The disordered stretch occupies residues Lys51–Thr92. The span at Gly66 to Ser80 shows a compositional bias: polar residues. Residue Gly321–Thr328 coordinates ATP. His540 is a binding site for Zn(2+). Glu541 is a catalytic residue. Residues His544 and Asp618 each coordinate Zn(2+). Residues Ser718–Ala747 are disordered. A compositionally biased stretch (basic and acidic residues) spans Ser728–Lys740.

It in the N-terminal section; belongs to the AAA ATPase family. The protein in the C-terminal section; belongs to the peptidase M41 family. Component of the mitochondrial inner membrane i-AAA protease supercomplex composed of MGR1, MGR3 and YME1. Interacts directly with MGR1. The cofactor is Zn(2+).

It localises to the mitochondrion inner membrane. Its function is as follows. Catalytic subunit of the mitochondrial inner membrane i-AAA protease supercomplex required for mitochondrial inner membrane protein turnover. The protease is probably ATP-dependent. Important to maintain the integrity of the mitochondrial compartment. Required both for the degradation of unassembled subunit 2 of cytochrome c oxidase (COX2) and for efficient assembly of mitochondrial respiratory chain. Binds unfolded substrates in an ATPase-independent manner; binding of folded COX2, a physiological substrate, requires an active ATPase but when COX2 is destabilized an active ATPase is no longer necessary. May process ATG32. In Saccharomyces cerevisiae (strain ATCC 204508 / S288c) (Baker's yeast), this protein is Mitochondrial inner membrane i-AAA protease supercomplex subunit YME1 (YME1).